A 60-amino-acid chain; its full sequence is Cytotoxin 4 (60 aa).

4 cysteine pairs are disulfide-bonded: Cys3–Cys21, Cys14–Cys38, Cys42–Cys53, and Cys54–Cys59.

This sequence belongs to the three-finger toxin family. Short-chain subfamily. Type IA cytotoxin sub-subfamily. In terms of assembly, monomer in solution; Homodimer and oligomer in the presence of negatively charged lipids forming a pore with a size ranging between 20 and 30 Angstroms. In terms of tissue distribution, expressed by the venom gland.

It localises to the secreted. The protein localises to the target cell membrane. Its function is as follows. Shows cytolytic activity on many different cells by forming pore in lipid membranes. In vivo, increases heart rate or kills the animal by cardiac arrest. In addition, it binds to heparin with high affinity, interacts with Kv channel-interacting protein 1 (KCNIP1) in a calcium-independent manner, and binds to integrin alpha-V/beta-3 (ITGAV/ITGB3) with moderate affinity. This Naja mossambica (Mozambique spitting cobra) protein is Cytotoxin 4.